The following is a 389-amino-acid chain: Alanine racemase TOXG (389 aa).

Residue Lys-235 is modified to N6-(pyridoxal phosphate)lysine.

It belongs to the threonine aldolase family. Requires pyridoxal 5'-phosphate as cofactor.

It catalyses the reaction L-alanine = D-alanine. It functions in the pathway mycotoxin biosynthesis; HC-toxin biosynthesis. In terms of biological role, alanine racemase, part of the diffuse TOX2 gene cluster that mediates the biosynthesis of the HC-toxin, cyclic tetrapeptide of structure cyclo(D-Pro-L-Ala-D-Ala-L-Aeo), where Aeo stands for 2-amino-9,10-epoxi-8-oxodecanoic acid. HC-toxin is a determinant of specificity and virulence in the interaction between the producing fungus and its host, maize. TOXG catalyzes the conversion of L-alanine into D-alanine, an essential precursor for the production of the major forms of HC-toxin by the non-ribosomal peptide synthetase HTS1. This chain is Alanine racemase TOXG, found in Cochliobolus carbonum (Maize leaf spot fungus).